The primary structure comprises 1024 residues: Beta-galactosidase (1024 aa).

2 residues coordinate substrate: Asn-103 and Asp-202. Asp-202 is a binding site for Na(+). Residues Glu-417, His-419, and Glu-462 each coordinate Mg(2+). Substrate contacts are provided by residues Glu-462 and 538–541 (EYAH). Glu-462 functions as the Proton donor in the catalytic mechanism. The Nucleophile role is filled by Glu-538. Asn-598 contacts Mg(2+). Phe-602 and Asn-605 together coordinate Na(+). Positions 605 and 1000 each coordinate substrate.

This sequence belongs to the glycosyl hydrolase 2 family. As to quaternary structure, homotetramer. Mg(2+) is required as a cofactor. Na(+) serves as cofactor.

It catalyses the reaction Hydrolysis of terminal non-reducing beta-D-galactose residues in beta-D-galactosides.. The protein is Beta-galactosidase of Escherichia coli O127:H6 (strain E2348/69 / EPEC).